The sequence spans 118 residues: Large ribosomal subunit protein bL20 (118 aa).

It belongs to the bacterial ribosomal protein bL20 family.

Binds directly to 23S ribosomal RNA and is necessary for the in vitro assembly process of the 50S ribosomal subunit. It is not involved in the protein synthesizing functions of that subunit. The sequence is that of Large ribosomal subunit protein bL20 from Stutzerimonas stutzeri (strain A1501) (Pseudomonas stutzeri).